Reading from the N-terminus, the 308-residue chain is Glutamyl-Q tRNA(Asp) synthetase (308 aa).

Residues 19–23 and E55 contribute to the L-glutamate site; that span reads RFAPS. Positions 22–32 match the 'HIGH' region motif; the sequence is PSPSGELHFGS. Positions 111, 113, 125, and 129 each coordinate Zn(2+). Y182 and R200 together coordinate L-glutamate. The short motif at 238–242 is the 'KMSKS' region element; the sequence is KLSKQ. An ATP-binding site is contributed by K241.

Belongs to the class-I aminoacyl-tRNA synthetase family. GluQ subfamily. Zn(2+) serves as cofactor.

Functionally, catalyzes the tRNA-independent activation of glutamate in presence of ATP and the subsequent transfer of glutamate onto a tRNA(Asp). Glutamate is transferred on the 2-amino-5-(4,5-dihydroxy-2-cyclopenten-1-yl) moiety of the queuosine in the wobble position of the QUC anticodon. The protein is Glutamyl-Q tRNA(Asp) synthetase of Shigella flexneri.